A 199-amino-acid chain; its full sequence is 3-isopropylmalate dehydratase small subunit (199 aa).

The protein belongs to the LeuD family. LeuD type 1 subfamily. In terms of assembly, heterodimer of LeuC and LeuD.

The catalysed reaction is (2R,3S)-3-isopropylmalate = (2S)-2-isopropylmalate. It functions in the pathway amino-acid biosynthesis; L-leucine biosynthesis; L-leucine from 3-methyl-2-oxobutanoate: step 2/4. Functionally, catalyzes the isomerization between 2-isopropylmalate and 3-isopropylmalate, via the formation of 2-isopropylmaleate. The protein is 3-isopropylmalate dehydratase small subunit of Aeromonas salmonicida (strain A449).